Here is a 183-residue protein sequence, read N- to C-terminus: Ribosome-recycling factor (183 aa).

Belongs to the RRF family.

It is found in the cytoplasm. In terms of biological role, responsible for the release of ribosomes from messenger RNA at the termination of protein biosynthesis. May increase the efficiency of translation by recycling ribosomes from one round of translation to another. This Buchnera aphidicola subsp. Baizongia pistaciae (strain Bp) protein is Ribosome-recycling factor.